The following is a 187-amino-acid chain: tRNA (cytidine(56)-2'-O)-methyltransferase (187 aa).

S-adenosyl-L-methionine is bound by residues Leu94 and 120 to 124 (GAEKV).

The protein belongs to the aTrm56 family. Homodimer.

Its subcellular location is the cytoplasm. The enzyme catalyses cytidine(56) in tRNA + S-adenosyl-L-methionine = 2'-O-methylcytidine(56) in tRNA + S-adenosyl-L-homocysteine + H(+). In terms of biological role, specifically catalyzes the AdoMet-dependent 2'-O-ribose methylation of cytidine at position 56 in tRNAs. The polypeptide is tRNA (cytidine(56)-2'-O)-methyltransferase (Hyperthermus butylicus (strain DSM 5456 / JCM 9403 / PLM1-5)).